Here is a 276-residue protein sequence, read N- to C-terminus: Rhomboid protease GlpG (276 aa).

The next 6 membrane-spanning stretches (helical) occupy residues 94-114, 142-162, 169-189, 192-212, 229-249, and 250-270; these read GPVT…MSLI, IFMH…WYLG, LGSG…GYVQ, FSGP…GYVW, LIIF…GMSM, and ANGA…VDTL. S201 acts as the Nucleophile in catalysis. H254 is a catalytic residue.

The protein belongs to the peptidase S54 family.

It localises to the cell inner membrane. The catalysed reaction is Cleaves type-1 transmembrane domains using a catalytic dyad composed of serine and histidine that are contributed by different transmembrane domains.. Its function is as follows. Rhomboid-type serine protease that catalyzes intramembrane proteolysis. This chain is Rhomboid protease GlpG, found in Salmonella dublin (strain CT_02021853).